Reading from the N-terminus, the 668-residue chain is DNA mismatch repair protein MutL (668 aa).

Positions 437–459 (TYQSQYSETGSHSQETLPLSEQK) are disordered. The span at 438-459 (YQSQYSETGSHSQETLPLSEQK) shows a compositional bias: polar residues.

This sequence belongs to the DNA mismatch repair MutL/HexB family.

This protein is involved in the repair of mismatches in DNA. It is required for dam-dependent methyl-directed DNA mismatch repair. May act as a 'molecular matchmaker', a protein that promotes the formation of a stable complex between two or more DNA-binding proteins in an ATP-dependent manner without itself being part of a final effector complex. This Leuconostoc citreum (strain KM20) protein is DNA mismatch repair protein MutL.